The primary structure comprises 114 residues: N(4)-acetylcytidine amidohydrolase (114 aa).

The ASCH domain occupies 8 to 93 (TFFEFLTPLV…ALIQEIYPNI (86 aa)). Catalysis depends on K22, which acts as the Proton acceptor. The Nucleophile role is filled by T25. E75 serves as the catalytic Proton donor.

The protein belongs to the N(4)-acetylcytidine amidohydrolase family.

The catalysed reaction is N(4)-acetylcytidine + H2O = cytidine + acetate + H(+). It catalyses the reaction N(4)-acetyl-2'-deoxycytidine + H2O = 2'-deoxycytidine + acetate + H(+). It carries out the reaction N(4)-acetylcytosine + H2O = cytosine + acetate + H(+). Catalyzes the hydrolysis of N(4)-acetylcytidine (ac4C). In Vibrio cholerae serotype O1 (strain ATCC 39541 / Classical Ogawa 395 / O395), this protein is N(4)-acetylcytidine amidohydrolase.